Reading from the N-terminus, the 290-residue chain is UPF0761 membrane protein ASA_4118 (290 aa).

A run of 6 helical transmembrane segments spans residues 48–68 (LLSL…FPVF), 104–124 (NTTA…ISAI), 144–164 (FAMY…SIAI), 182–202 (IGYL…FLLV), 216–236 (AFIG…GFAI), and 250–270 (ALAT…VVLL).

Belongs to the UPF0761 family.

It localises to the cell inner membrane. In Aeromonas salmonicida (strain A449), this protein is UPF0761 membrane protein ASA_4118.